A 581-amino-acid polypeptide reads, in one-letter code: Frizzled-3 (581 aa).

Positions 1–19 (MYAASILILHLTWAVATIA) are cleaved as a signal peptide. Residues 20–237 (ANGAGHNGPV…TSSQKKTSET (218 aa)) are Extracellular-facing. Residues 35 to 156 (PNGLQCQPIA…PEKHELCMQI (122 aa)) form the FZ domain. 5 cysteine pairs are disulfide-bonded: C40–C101, C48–C94, C85–C123, C112–C153, and C116–C141. N54 carries an N-linked (GlcNAc...) asparagine glycan. A glycan (N-linked (GlcNAc...) asparagine) is linked at N206. The chain crosses the membrane as a helical span at residues 238–258 (LILGLSAVCFVLTLFALVTFW). The Cytoplasmic segment spans residues 259–270 (AEPTRFGYPERP). Residues 271–291 (VLFLCLCYNLFSVCYLERIVF) form a helical membrane-spanning segment. At 292–321 (HNQARMHDVELQGRLMRPGCLLTPPCLASY) the chain is on the extracellular side. Residues 322 to 342 (ITTSYLSLCAASWWLIFALCF) form a helical membrane-spanning segment. Residues 343 to 359 (YLSSHKKWSSEALEKRS) lie on the Cytoplasmic side of the membrane. The helical transmembrane segment at 360 to 380 (GLFHVLAWVPPLAPPIAALLL) threads the bilayer. Residues 381–393 (EKVRPSELTGMCY) lie on the Extracellular side of the membrane. The helical transmembrane segment at 394–414 (APGFVELPALVLLLLGLYFTL) threads the bilayer. Topologically, residues 415–442 (RASRSLLSLQQQLQPTLAHHRFGQIRKR) are cytoplasmic. A helical transmembrane segment spans residues 443–463 (FVLFSLLYFAPTTAGVVAALC). Residues 464–488 (ERYADSVPSCSTPDDCLSPTPLSAW) lie on the Extracellular side of the membrane. A helical membrane pass occupies residues 489–509 (PALVRIFFQLVGGTLTGLWVW). Over 510–581 (SRKTCESYRN…PVYNPNQSRV (72 aa)) the chain is Cytoplasmic. Positions 579-581 (SRV) match the PDZ-binding motif.

Belongs to the G-protein coupled receptor Fz/Smo family. As to expression, wing, leg and eye imaginal disks. In embryos, expressed is seen in brain, proventriculus, Malpighian tubules, anal plate and visceral mesoderm of parasegment 8.

The protein resides in the membrane. Receptor for Wnt proteins. Most of frizzled receptors are coupled to the beta-catenin canonical signaling pathway, which leads to the activation of disheveled proteins, inhibition of GSK-3 kinase, nuclear accumulation of beta-catenin and activation of Wnt target genes. A second signaling pathway involving PKC and calcium fluxes has been seen for some family members, but it is not yet clear if it represents a distinct pathway or if it can be integrated in the canonical pathway, as PKC seems to be required for Wnt-mediated inactivation of GSK-3 kinase. Both pathways seem to involve interactions with G-proteins. Required to coordinate the cytoskeletons of epidermal cells to produce a parallel array of cuticular hairs and bristles. This is Frizzled-3 (fz3) from Drosophila melanogaster (Fruit fly).